Here is a 320-residue protein sequence, read N- to C-terminus: Nucleotide-binding protein Acid_7395 (320 aa).

The segment at 1–34 (MPLRKKGAATTKAAATRKDSAKAPASSKRKDAPQ) is disordered. 44–51 (GLSGSGKG) contacts ATP. 94-97 (DIRE) contacts GTP.

The protein belongs to the RapZ-like family.

Displays ATPase and GTPase activities. The sequence is that of Nucleotide-binding protein Acid_7395 from Solibacter usitatus (strain Ellin6076).